Here is a 152-residue protein sequence, read N- to C-terminus: Ribosome maturation factor RimP (152 aa).

The protein belongs to the RimP family.

It is found in the cytoplasm. In terms of biological role, required for maturation of 30S ribosomal subunits. This chain is Ribosome maturation factor RimP, found in Francisella tularensis subsp. tularensis (strain FSC 198).